A 147-amino-acid polypeptide reads, in one-letter code: RxLR effector protein Avr3a (147 aa).

The first 21 residues, 1–21 (MRLAIMLSATAVAINFATCSA), serve as a signal peptide directing secretion. Residues 44-59 (RLLRKNEENEETSEER) carry the RxLR-dEER motif. K48 bears the N6-acetyllysine mark. Residues 77-147 (ALTKRADAKK…YMMHLGLTGY (71 aa)) form an effector domain region.

It belongs to the RxLR effector family. As to quaternary structure, forms homodimers via the RxLR-dEER motif. Interacts with host E3 ligase CMPG1. Interacts with host DRP2. Post-translationally, proteolytically cleaved. The cleavage site directly after the RxLR sequence and the high conservation among other effector proteins suggest that the RxLR motif might play a crucial role in the intracellular processing before secretion. Glycosylated. In terms of processing, N-acetylated at Lys-48 after cleavage.

Its subcellular location is the secreted. It is found in the host cytoplasm. The protein resides in the host endosome. Multifunctional effector that can suppress host BAK1/SERK3-mediated immunity through at least two different pathways. Manipulates plant immunity by targeting and stabilizing host E3 ligase CMPG1. Preventing the normal 26S proteasome-dependent degradation of potato CMPG1, and thus potentially of its protein substrates in the host cell, further abolishes host cell death during the biotrophic phase of infection. Also associates with the dynamin-related protein 2 (DRP2), a plant GTPase involved in immune receptor-mediated endocytosis. The Avr3A(KI) form is recognized by R3a which triggers R3a-mediated hypersensitivity and suppresses INF1-induced cell death. The protein is RxLR effector protein Avr3a of Phytophthora infestans (Potato late blight agent).